A 497-amino-acid chain; its full sequence is MTAAGPGAAPSPGRCDSDPASPGAQSPKDDNEDNSNDGTHPCKRRRMGSGDSSRSCETSSQDLSFSYYPAENLIEYKWPPDETGEYYMLQEQVSEYLGVTSFKRKYPDLERRDLSHKEKLYLRELNVITETQCTLGLTALRSDEVIDLMIKEYPAKHAEYSVILQEKERQRITDHYKEYSQMQQQSTQKVEASKVPEYIKKAAKKAAEFNSNLNRERMEERRAYFDLQTHVIQVPQGKYKVLPTDRTKVSSYPVALIPGQFQEYYKRYSPDELRYLPLNTALYEPPLDPELPALDSDGDSDDGEDGGGDEKRKNKGTSDSSSGNVSEGDSPPDSQEDTFHGRQKSKDKMATPRKDGSKRSVLSKSAPGYKPKVIPNALCGICLKGKESNKKGKAESLIHCSQCDNSGHPSCLDMTMELVSMIKTYPWQCMECKTCIICGQPHHEEEMMFCDVCDRGYHTFCVGLGAIPSGRWICDCCQRAPPTPRKVGRRGKNSKEG.

The segment covering M1–G13 has biased composition (low complexity). The tract at residues M1–Q61 is disordered. S11, S35, and S49 each carry phosphoserine. The segment at M88–Q184 is essential to induce neural progenitor proliferation. The SAY stretch occupies residues M88–L294. A Glycyl lysine isopeptide (Lys-Gly) (interchain with G-Cter in SUMO2) cross-link involves residue K240. The residue at position 269 (S269) is a Phosphoserine. The segment covering E284–D295 has biased composition (low complexity). Residues E284–G368 are disordered. The tract at residues L291 to D333 is essential to induce neural progenitor proliferation. S296, S300, S326, and S330 each carry phosphoserine. Positions S296 to G307 are enriched in acidic residues. Over residues T317–E327 the composition is skewed to polar residues. A compositionally biased stretch (basic and acidic residues) spans D337–K358. A PHD-type 1; degenerate zinc finger spans residues L378–C435. Residue K384 forms a Glycyl lysine isopeptide (Lys-Gly) (interchain with G-Cter in SUMO2) linkage. A PHD-type 2; degenerate zinc finger spans residues I437–A480.

This sequence belongs to the SAYP family. As to quaternary structure, component of neural progenitors-specific chromatin remodeling complex (npBAF complex) composed of at least, ARID1A/BAF250A or ARID1B/BAF250B, SMARCD1/BAF60A, SMARCD3/BAF60C, SMARCA2/BRM/BAF190B, SMARCA4/BRG1/BAF190A, SMARCB1/BAF47, SMARCC1/BAF155, SMARCE1/BAF57, SMARCC2/BAF170, PHF10/BAF45A, ACTL6A/BAF53A and actin. Interacts with ACTL6A/BAF53A, SMARCA2/BRM/BAF190B, SMARCA4/BRG1/BAF190A and PBRM1/BAF180. In terms of tissue distribution, widely expressed. Expressed selectively in neural stem and progenitor cells (at protein level).

The protein localises to the nucleus. Involved in transcription activity regulation by chromatin remodeling. Belongs to the neural progenitors-specific chromatin remodeling complex (npBAF complex) and is required for the proliferation of neural progenitors. During neural development a switch from a stem/progenitor to a post-mitotic chromatin remodeling mechanism occurs as neurons exit the cell cycle and become committed to their adult state. The transition from proliferating neural stem/progenitor cells to post-mitotic neurons requires a switch in subunit composition of the npBAF and nBAF complexes. As neural progenitors exit mitosis and differentiate into neurons, npBAF complexes which contain ACTL6A/BAF53A and PHF10/BAF45A, are exchanged for homologous alternative ACTL6B/BAF53B and DPF1/BAF45B or DPF3/BAF45C subunits in neuron-specific complexes (nBAF). The npBAF complex is essential for the self-renewal/proliferative capacity of the multipotent neural stem cells. The nBAF complex along with CREST plays a role regulating the activity of genes essential for dendrite growth. This chain is PHD finger protein 10 (Phf10), found in Mus musculus (Mouse).